The sequence spans 69 residues: Intrepicalcin (69 aa).

Positions 1 to 27 are cleaved as a signal peptide; sequence MRQNTMTIIFIVFIVTFASLTIYGAEA. Positions 28–36 are excised as a propeptide; the sequence is SEANFLERR. Cystine bridges form between C39-C53, C46-C57, and C52-C68. The essential for stimulation of [3H]ryanodine binding to RYR1 stretch occupies residues 59-60; that stretch reads RR.

It belongs to the scorpion calcin family. Expressed by the venom gland.

The protein localises to the secreted. In terms of biological role, this toxin stabilizes ryanodine receptor 1 (RyR1) opening in a long-lasting subconductance state (55% of the full conductance state). Furthermore, it triggers calcium release from sarcoplasmic vesicles (45.3 nM are enough to induce a sharp release, and 50% of the total calcium is released after toxin (100 nM) addition) probably by acting as a cell-penetrating peptide (CPP). In addition, it has been shown to dose-dependently stimulate ryanodine binding to RyR1 (EC(50)=17.4 nM). It also augments the bell-shaped calcium-[3H]ryanodine binding curve that is maximal at about 10 uM calcium concentration. It binds a different site as ryanodine. It acts synergistically with caffeine. In vivo, intracerebroventricular injection into mice induces neurotoxic symptoms, followed by death. This is Intrepicalcin from Thorellius intrepidus (Scorpion).